Reading from the N-terminus, the 75-residue chain is Small ribosomal subunit protein bS16 (75 aa).

This sequence belongs to the bacterial ribosomal protein bS16 family.

This is Small ribosomal subunit protein bS16 from Nitratiruptor sp. (strain SB155-2).